The chain runs to 1262 residues: Clustered mitochondria protein homolog (1262 aa).

The interval 1 to 47 is disordered; that stretch reads MTSGSELKAEVDAPVVNGKDELVHEEDNNDSGHSSINTPDASEDKQT. Positions 31-40 are enriched in polar residues; it reads SGHSSINTPD. One can recognise a Clu domain in the interval 335–580; that stretch reads AIELIEPFRV…RSMPPDVHYL (246 aa).

This sequence belongs to the CLU family.

Its subcellular location is the cytoplasm. Its function is as follows. mRNA-binding protein involved in proper cytoplasmic distribution of mitochondria. The polypeptide is Clustered mitochondria protein homolog (Caenorhabditis briggsae).